The following is a 468-amino-acid chain: ATP synthase subunit beta (468 aa).

Position 155 to 162 (155 to 162 (GGAGVGKT)) interacts with ATP.

This sequence belongs to the ATPase alpha/beta chains family. F-type ATPases have 2 components, CF(1) - the catalytic core - and CF(0) - the membrane proton channel. CF(1) has five subunits: alpha(3), beta(3), gamma(1), delta(1), epsilon(1). CF(0) has three main subunits: a(1), b(2) and c(9-12). The alpha and beta chains form an alternating ring which encloses part of the gamma chain. CF(1) is attached to CF(0) by a central stalk formed by the gamma and epsilon chains, while a peripheral stalk is formed by the delta and b chains.

It localises to the cell inner membrane. It catalyses the reaction ATP + H2O + 4 H(+)(in) = ADP + phosphate + 5 H(+)(out). Its function is as follows. Produces ATP from ADP in the presence of a proton gradient across the membrane. The catalytic sites are hosted primarily by the beta subunits. This is ATP synthase subunit beta from Thermotoga petrophila (strain ATCC BAA-488 / DSM 13995 / JCM 10881 / RKU-1).